Consider the following 104-residue polypeptide: MAGKTVTRADLTEAVYQRVGLSRTESAALVETVLSEICTCLASGETVKLSSFGSFVVRDKGKRVGRNPKTGVEVAIEPRRVMVFKPSNVLKARINGGAAEPDDE.

It belongs to the bacterial histone-like protein family. In terms of assembly, heterodimer of an alpha and a beta chain.

Functionally, this protein is one of the two subunits of integration host factor, a specific DNA-binding protein that functions in genetic recombination as well as in transcriptional and translational control. This chain is Integration host factor subunit alpha, found in Methylobacterium sp. (strain 4-46).